Reading from the N-terminus, the 181-residue chain is UPF0398 protein lmo1889 (181 aa).

Belongs to the UPF0398 family.

This chain is UPF0398 protein lmo1889, found in Listeria monocytogenes serovar 1/2a (strain ATCC BAA-679 / EGD-e).